Reading from the N-terminus, the 447-residue chain is Phosphoglucosamine mutase (447 aa).

Serine 106 serves as the catalytic Phosphoserine intermediate. The Mg(2+) site is built by serine 106, aspartate 245, aspartate 247, and aspartate 249. Serine 106 carries the post-translational modification Phosphoserine.

This sequence belongs to the phosphohexose mutase family. Mg(2+) is required as a cofactor. In terms of processing, activated by phosphorylation.

The enzyme catalyses alpha-D-glucosamine 1-phosphate = D-glucosamine 6-phosphate. Functionally, catalyzes the conversion of glucosamine-6-phosphate to glucosamine-1-phosphate. The protein is Phosphoglucosamine mutase of Cupriavidus taiwanensis (strain DSM 17343 / BCRC 17206 / CCUG 44338 / CIP 107171 / LMG 19424 / R1) (Ralstonia taiwanensis (strain LMG 19424)).